The sequence spans 359 residues: Mitochondrial glutathione transporter SLC25A39 (359 aa).

Residues 1–14 (MADQDPAGISPLQQ) are Mitochondrial intermembrane-facing. Solcar repeat units lie at residues 9 to 151 (ISPL…LKAF), 159 to 243 (SDLY…VKSW), and 253 to 347 (TSVG…GKSF). A helical transmembrane segment spans residues 15-35 (MVASGTGAVVTSLFMTPLDVV). The Mitochondrial matrix portion of the chain corresponds to 36–121 (KVRLQSQRPS…VKIVRHEGTR (86 aa)). The [2Fe-2S] cluster site is built by C74, C78, C88, and C94. The helical transmembrane segment at 122–142 (TLWSGLPATLVMTVPATAIYF) threads the bilayer. The Mitochondrial intermembrane portion of the chain corresponds to 143–160 (TAYDQLKAFLCGRALTSD). Residues 161 to 181 (LYAPMVAGALARLGTVTVISP) traverse the membrane as a helical segment. The Mitochondrial matrix segment spans residues 182–214 (LELMRTKLQAQHVSYRELGACVRTAVAQGGWRS). Residues 215 to 235 (LWLGWGPTALRDVPFSALYWF) form a helical membrane-spanning segment. Residues 236-258 (NYELVKSWLNGFRPKDQTSVGMS) are Mitochondrial intermembrane-facing. Residues 259 to 279 (FVAGGISGTVAAVLTLPFDVV) form a helical membrane-spanning segment. The Mitochondrial matrix portion of the chain corresponds to 280–317 (KTQRQVALGAMEAVRVNPLHVDSTWLLLRRIRAESGTK). The chain crosses the membrane as a helical span at residues 318-338 (GLFAGFLPRIIKAAPSCAIMI). At 339–359 (STYEFGKSFFQRLNQDRLLGG) the chain is on the mitochondrial intermembrane side.

This sequence belongs to the mitochondrial carrier (TC 2.A.29) family. In terms of processing, cleaved and degraded by AFG3L2; degradation by AFG3L2 is regulated by the ability of SLC25A39 to bind iron-sulfur. In absence of mitochondrial glutathione, SLC25A39 binds iron-sulfur, preventing cleavage and degradation by AFG3L2. The presence of mitochondrial glutathione prevents iron-sulfur-binding to SLC25A39, promoting cleavage and degradation by AFG3L2. Expressed in many tissues. Abundant in testis and kidney.

It localises to the mitochondrion inner membrane. It carries out the reaction glutathione(in) = glutathione(out). With respect to regulation, the activity of SLC25A39 is regulated by levels of mitochondrial glutathione via its ability to bind [2Fe-2S] iron-sulfur cluster. Upon physiological levels of mitochondrial glutathione, glutathione prevents iron-sulfur-binding to SLC25A39 promoting cleavage and degradation by AFG3L2. Upon depletion of mitochondrial glutathione, SLC25A39 binds iron-sulfur, preventing cleavage and degradation by AFG3L2. Mitochondrial transporter required for glutathione import into mitochondria. Glutathione, which plays key roles in oxidative metabolism, is produced exclusively in the cytosol and is imported in many organelles. Mitochondrial glutathione is required for the activity and stability of proteins containing iron-sulfur clusters, as well as erythropoiesis. The protein is Mitochondrial glutathione transporter SLC25A39 of Homo sapiens (Human).